A 321-amino-acid polypeptide reads, in one-letter code: Malate dehydrogenase (321 aa).

NAD(+) is bound by residues 10–15 and Asp-34; that span reads GSGMIG. Positions 83 and 89 each coordinate substrate. Residues Asn-96 and 119–121 each bind NAD(+); that span reads ITN. Residues Asn-121 and Arg-152 each coordinate substrate. The active-site Proton acceptor is His-176.

This sequence belongs to the LDH/MDH superfamily. MDH type 3 family.

It carries out the reaction (S)-malate + NAD(+) = oxaloacetate + NADH + H(+). Catalyzes the reversible oxidation of malate to oxaloacetate. The polypeptide is Malate dehydrogenase (Chelativorans sp. (strain BNC1)).